A 398-amino-acid chain; its full sequence is Cathepsin E (398 aa).

An N-terminal signal peptide occupies residues 1 to 21 (MKPLFVLLLLLLLLDLAQAQG). A propeptide spans 22 to 58 (VLHRVPLRRHQSLRKKLRAQGQLSDFWRSHNLDMIEF) (activation peptide). Residues 80-394 (YFGTVSIGSP…DRGNNQVGLA (315 aa)) form the Peptidase A1 domain. N-linked (GlcNAc...) asparagine glycosylation occurs at Asn-92. Residue Asp-98 is part of the active site. Cystine bridges form between Cys-111-Cys-116 and Cys-274-Cys-278. Residue Asp-283 is part of the active site.

Belongs to the peptidase A1 family. Homodimer; disulfide-linked. In terms of processing, glycosylated. The nature of the carbohydrate chain varies between cell types. In brain microglia, the proenzyme contains a high mannose-type oligosaccharide, while the mature enzyme contains a complex-type oligosaccharide. In stomach and spleen, the mature enzyme contains a high mannose-type oligosaccharide. In erythrocyte membranes, the mature enzyme contains a complex-type oligosaccharide. In terms of tissue distribution, expressed abundantly in lymphocytes and macrophages of the thymus and spleen, and in the M cells of the intestine. In the brain, expression is limited to reactive microglial cells, the large pyrimidial neurons in the cerebral cortex, the CA1 and CA3 pyrimidial neurons of the hippocampus, the large neurons of the neostriatum, and the Purkinje neurons of the cerebellum.

The protein resides in the endosome. The enzyme catalyses Similar to cathepsin D, but slightly broader specificity.. Functionally, may have a role in immune function. Probably involved in the processing of antigenic peptides during MHC class II-mediated antigen presentation. May play a role in activation-induced lymphocyte depletion in the thymus, and in neuronal degeneration and glial cell activation in the brain. The polypeptide is Cathepsin E (Ctse) (Rattus norvegicus (Rat)).